The primary structure comprises 393 residues: Pre-mRNA-splicing regulator WTAP (393 aa).

Residues 242 to 393 are disordered; the sequence is QIQISGNRTP…SSVNVQGSVL (152 aa). Basic and acidic residues predominate over residues 254 to 267; the sequence is EPKDEGETSGKDCG. 2 stretches are compositionally biased toward polar residues: residues 272–286 and 321–353; these read GPSN…THSS and DGSS…SNDT. The segment covering 354–365 has biased composition (basic and acidic residues); that stretch reads DSNHDSQEEKPV. The segment covering 369–393 has biased composition (polar residues); sequence GNRTVSSRHLQNGLDSSVNVQGSVL.

This sequence belongs to the fl(2)d family. Component of the WMM complex, a N6-methyltransferase complex composed of a catalytic subcomplex, named MAC, and of an associated subcomplex, named MACOM. Component of the MACOM subcomplex.

It localises to the nucleus speckle. Its subcellular location is the nucleus. It is found in the nucleoplasm. Associated component of the WMM complex, a complex that mediates N6-methyladenosine (m6A) methylation of RNAs, a modification that plays a role in the efficiency of mRNA splicing and RNA processing. The chain is Pre-mRNA-splicing regulator WTAP from Xenopus laevis (African clawed frog).